We begin with the raw amino-acid sequence, 422 residues long: MAATATMAMPLANRLRCKPNTNSSSPSRTLFGRRVTMISSSRWMCRGSAVSGSAIMSAAADDVAAVRREEDEEMRSYLSPEKLEVLTQMEPWVEEHVLPLLKPVEAAWQPSDLLPDPAVLGGEGFHAACAELRERAAGVPDLLLVCLVANMVTEEALPTYQSSLNRVRAVGDLTGADATAWARWIRGWSAEENRHGDVLNRYMYLSGRFDMAEVERAVHRLIRSGMAVDPPCSPYHAFVYTAFQERATAVAHGNTARLVGARGHGDAALARVCGTVAADEKRHEAAYTRIVSRLLEADPDAGVRAVARMLRRGVAMPTSPISDGRRDDLYACVVSLAEQAGTYTVSDYCSIVEHLVWEWRVEELAAGLSGEGRRARDYVCELPQKIRRMKEKAHERAVKAQKKPISIPINWIFDRHVSVMLP.

Residues 1 to 46 (MAATATMAMPLANRLRCKPNTNSSSPSRTLFGRRVTMISSSRWMCR) constitute a chloroplast transit peptide. Glu154, Glu192, His195, Glu245, Glu280, and His283 together coordinate Fe cation.

Belongs to the fatty acid desaturase type 2 family. As to quaternary structure, homodimer. The cofactor is Fe(2+).

Its subcellular location is the plastid. It localises to the chloroplast. Its pathway is lipid metabolism; fatty acid metabolism. Functionally, introduces a cis double bond in the acyl chain of an acyl-[acyl-carrier protein]. The protein is Acyl-[acyl-carrier-protein] desaturase 6, chloroplastic of Oryza sativa subsp. indica (Rice).